Reading from the N-terminus, the 231-residue chain is MPELAVRTEFDYSSEIYKDAYSRINAIVIEGEQEAYSNYLQMAELLPEDKEELTRLAKMENRHKKGFQACGNNLQVNPDMPYAQEFFAGLHGNFQHAFSEGKVVTCLLIQALIIEAFAIAAYNIYIPVADDFARKITEGVVKDEYTHLNYGEEWLKANFATAKEELEQANKENLPLVWKMLNQVQGDAKVLGMEKEALVEDFMISYGEALSNIGFSTREIMRMSSYGLAGV.

Glutamate 32, glutamate 60, histidine 63, glutamate 115, and histidine 147 together coordinate Fe cation.

Belongs to the aldehyde decarbonylase family. It depends on Binds 2 metal cations per subunit. The catalytic dinuclear metal-binding site could be either a di-iron or a manganese-iron cofactor. as a cofactor.

It carries out the reaction a long-chain fatty aldehyde + 2 NADPH + O2 + H(+) = a long-chain alkane + formate + 2 NADP(+) + H2O. Its function is as follows. Catalyzes the decarbonylation of fatty aldehydes to alkanes. Requires the presence of ferredoxin, ferredoxin reductase and NADPH for in vitro decarbonylase activity. Involved in the biosynthesis of alkanes, mainly heptadecane and pentadecane. The sequence is that of Aldehyde decarbonylase from Synechocystis sp. (strain ATCC 27184 / PCC 6803 / Kazusa).